The primary structure comprises 88 residues: Phosphocarrier protein HPr (88 aa).

The HPr domain occupies 1–88; sequence MEKKEFHIVA…ETLQKEGLAE (88 aa). Residue histidine 15 is the Pros-phosphohistidine intermediate of the active site. The residue at position 46 (serine 46) is a Phosphoserine; by HPrK/P.

The protein belongs to the HPr family. As to quaternary structure, monomer.

The protein resides in the cytoplasm. Phosphorylation on Ser-46 inhibits the phosphoryl transfer from enzyme I to HPr. Functionally, general (non sugar-specific) component of the phosphoenolpyruvate-dependent sugar phosphotransferase system (sugar PTS). This major carbohydrate active-transport system catalyzes the phosphorylation of incoming sugar substrates concomitantly with their translocation across the cell membrane. The phosphoryl group from phosphoenolpyruvate (PEP) is transferred to the phosphoryl carrier protein HPr by enzyme I. Phospho-HPr then transfers it to the PTS EIIA domain. In terms of biological role, P-Ser-HPr interacts with the catabolite control protein A (CcpA), forming a complex that binds to DNA at the catabolite response elements cre, operator sites preceding a large number of catabolite-regulated genes. Thus, P-Ser-HPr is a corepressor in carbon catabolite repression (CCR), a mechanism that allows bacteria to coordinate and optimize the utilization of available carbon sources. P-Ser-HPr also plays a role in inducer exclusion, in which it probably interacts with several non-PTS permeases and inhibits their transport activity. This chain is Phosphocarrier protein HPr (ptsH), found in Enterococcus faecalis (strain ATCC 700802 / V583).